Here is a 227-residue protein sequence, read N- to C-terminus: UPF0173 metal-dependent hydrolase BALH_4194 (227 aa).

This sequence belongs to the UPF0173 family.

This Bacillus thuringiensis (strain Al Hakam) protein is UPF0173 metal-dependent hydrolase BALH_4194.